Here is a 197-residue protein sequence, read N- to C-terminus: GTP cyclohydrolase-2 (197 aa).

49–53 (RVHSE) contributes to the GTP binding site. C54, C65, and C67 together coordinate Zn(2+). GTP-binding positions include Q70, 92–94 (EGR), and T114. Catalysis depends on D126, which acts as the Proton acceptor. R128 (nucleophile) is an active-site residue. The GTP site is built by T149 and K154.

It belongs to the GTP cyclohydrolase II family. Homodimer. Requires Zn(2+) as cofactor.

The enzyme catalyses GTP + 4 H2O = 2,5-diamino-6-hydroxy-4-(5-phosphoribosylamino)-pyrimidine + formate + 2 phosphate + 3 H(+). The protein operates within cofactor biosynthesis; riboflavin biosynthesis; 5-amino-6-(D-ribitylamino)uracil from GTP: step 1/4. In terms of biological role, catalyzes the conversion of GTP to 2,5-diamino-6-ribosylamino-4(3H)-pyrimidinone 5'-phosphate (DARP), formate and pyrophosphate. This Pectobacterium atrosepticum (strain SCRI 1043 / ATCC BAA-672) (Erwinia carotovora subsp. atroseptica) protein is GTP cyclohydrolase-2.